The primary structure comprises 1036 residues: Lethal(2) giant larvae protein homolog 1 (1036 aa).

WD repeat units follow at residues 38 to 71 (SALA…FTGL), 78 to 119 (VTQM…GLSF), 139 to 175 (VTVV…GQTL), 199 to 233 (SLQG…EHVF), 239 to 271 (LESL…GSPP), 289 to 331 (AINK…ETLV), 339 to 373 (VIDF…VLDL), 395 to 473 (TCSA…YKLS), 517 to 592 (QKVA…RVLI), and 601 to 662 (TAVA…LRQS). At Ser662 the chain carries Phosphoserine. The tract at residues 670-694 (RVSGKKRATTASSKLQEANAQLAEQ) is disordered. Over residues 678–693 (TTASSKLQEANAQLAE) the composition is skewed to polar residues. WD repeat units lie at residues 722-782 (VRCL…KEVQ), 791-843 (AIAV…VSAK), 848-901 (LTAH…VHYS), and 915-938 (VFTR…SLSA). Thr957 bears the Phosphothreonine mark. Residues Ser964, Ser982, and Ser989 each carry the phosphoserine modification. Positions 980 to 1002 (PESCEGSPSSAHSKRADTMEPPE) are disordered.

This sequence belongs to the WD repeat L(2)GL family. In terms of assembly, associated with nonmuscle myosin II heavy chain. Interacts with PRKCI/aPKC, PARD6B/Par-6 and PARD6A. Interacts with STX4A. Interacts with DCAF1. Interacts with RAB10 (GDP-bound form); the interaction is direct and promotes RAB10 association with membranes and activation through competition with the Rab inhibitor GDI1. Post-translationally, phosphorylated by PRKCI. In terms of tissue distribution, expressed at high level in the testis and at lower level in ovary, brain, spleen and kidney.

It localises to the early endosome membrane. It is found in the golgi apparatus. The protein localises to the trans-Golgi network membrane. Its subcellular location is the golgi apparatus membrane. The protein resides in the cell projection. It localises to the axon. It is found in the cytoplasm. The protein localises to the cytoskeleton. Cortical cytoskeleton protein found in a complex involved in maintaining cell polarity and epithelial integrity. Involved in the regulation of mitotic spindle orientation, proliferation, differentiation and tissue organization of neuroepithelial cells. Involved in axonogenesis through RAB10 activation thereby regulating vesicular membrane trafficking toward the axonal plasma membrane. The chain is Lethal(2) giant larvae protein homolog 1 (Llgl1) from Rattus norvegicus (Rat).